The following is a 352-amino-acid chain: Peptide chain release factor 1 (352 aa).

Residue glutamine 233 is modified to N5-methylglutamine. The tract at residues asparagine 288 to asparagine 309 is disordered. Positions alanine 289–arginine 306 are enriched in basic and acidic residues.

It belongs to the prokaryotic/mitochondrial release factor family. In terms of processing, methylated by PrmC. Methylation increases the termination efficiency of RF1.

It localises to the cytoplasm. Its function is as follows. Peptide chain release factor 1 directs the termination of translation in response to the peptide chain termination codons UAG and UAA. In Helicobacter pylori (strain HPAG1), this protein is Peptide chain release factor 1.